The sequence spans 293 residues: Ribosomal protein L11 methyltransferase (293 aa).

Residues Thr-145, Gly-166, Asp-188, and Asn-230 each contribute to the S-adenosyl-L-methionine site.

The protein belongs to the methyltransferase superfamily. PrmA family.

The protein resides in the cytoplasm. It carries out the reaction L-lysyl-[protein] + 3 S-adenosyl-L-methionine = N(6),N(6),N(6)-trimethyl-L-lysyl-[protein] + 3 S-adenosyl-L-homocysteine + 3 H(+). In terms of biological role, methylates ribosomal protein L11. In Actinobacillus pleuropneumoniae serotype 5b (strain L20), this protein is Ribosomal protein L11 methyltransferase.